A 160-amino-acid chain; its full sequence is Protein max (160 aa).

The span at 1–13 (MSDNDDIEVESDE) shows a compositional bias: acidic residues. A disordered region spans residues 1 to 40 (MSDNDDIEVESDEEQPRFQSAADKRAHHNALERKRRDHIK). An N-acetylserine modification is found at serine 2. 2 positions are modified to phosphoserine: serine 2 and serine 11. A bHLH domain is found at 23–74 (DKRAHHNALERKRRDHIKDSFHSLRDSVPSLQGEKASRAQILDKATEYIQYM). A compositionally biased stretch (basic and acidic residues) spans 29–40 (NALERKRRDHIK). Lysine 66 is subject to N6-acetyllysine. The leucine-zipper stretch occupies residues 81-102 (HQQDIDDLKRQNALLEQQVRAL). The tract at residues 105–160 (ARSSAQLQTNYPSSDNSLYTNAKGGTISAFDGGSDSSSESEPEEPQNRKKLRMEAS) is disordered. Serine 107 is subject to Phosphoserine. The span at 107 to 124 (SSAQLQTNYPSSDNSLYT) shows a compositional bias: polar residues. N6-acetyllysine is present on residues lysine 153 and lysine 154.

This sequence belongs to the MAX family. As to quaternary structure, efficient DNA binding requires dimerization with another bHLH protein. Binds DNA as a heterodimer with MYC or MAD. Part of the E2F6.com-1 complex in G0 phase composed of E2F6, MGA, MAX, TFDP1, CBX3, BAT8, EUHMTASE1, RING1, RNF2, MBLR, L3MBTL2 and YAF2. Component of some MLL1/MLL complex, at least composed of the core components KMT2A/MLL1, ASH2L, HCFC1/HCF1, WDR5 and RBBP5, as well as the facultative components BACC1, CHD8, E2F6, HSP70, INO80C, KANSL1, LAS1L, MAX, MCRS1, MGA, MYST1/MOF, PELP1, PHF20, PRP31, RING2, RUVB1/TIP49A, RUVB2/TIP49B, SENP3, TAF1, TAF4, TAF6, TAF7, TAF9 and TEX10. Interacts with SPAG9. The heterodimer MYC:MAX interacts with ABI1; the interaction may enhance MYC:MAX transcriptional activity. Post-translationally, phosphorylated.

It is found in the nucleus. It localises to the cell projection. Its subcellular location is the dendrite. Functionally, transcription regulator. Forms a sequence-specific DNA-binding protein complex with MYC or MAD which recognizes the core sequence 5'-CAC[GA]TG-3'. The MYC:MAX complex is a transcriptional activator, whereas the MAD:MAX complex is a repressor. May repress transcription via the recruitment of a chromatin remodeling complex containing H3 'Lys-9' histone methyltransferase activity. Represses MYC transcriptional activity from E-box elements. This is Protein max from Rattus norvegicus (Rat).